Here is a 401-residue protein sequence, read N- to C-terminus: Imidazolonepropionase (401 aa).

Residues His-66 and His-68 each contribute to the Fe(3+) site. 2 residues coordinate Zn(2+): His-66 and His-68. 4-imidazolone-5-propanoate is bound by residues Arg-75, Tyr-138, and His-171. An N-formimidoyl-L-glutamate-binding site is contributed by Tyr-138. His-236 provides a ligand contact to Fe(3+). Residue His-236 coordinates Zn(2+). Gln-239 contributes to the 4-imidazolone-5-propanoate binding site. Position 311 (Asp-311) interacts with Fe(3+). Asp-311 provides a ligand contact to Zn(2+). Residues Asn-313 and Gly-315 each contribute to the N-formimidoyl-L-glutamate site. Thr-316 is a 4-imidazolone-5-propanoate binding site.

It belongs to the metallo-dependent hydrolases superfamily. HutI family. Zn(2+) is required as a cofactor. Fe(3+) serves as cofactor.

The protein resides in the cytoplasm. It catalyses the reaction 4-imidazolone-5-propanoate + H2O = N-formimidoyl-L-glutamate. The protein operates within amino-acid degradation; L-histidine degradation into L-glutamate; N-formimidoyl-L-glutamate from L-histidine: step 3/3. Its function is as follows. Catalyzes the hydrolytic cleavage of the carbon-nitrogen bond in imidazolone-5-propanoate to yield N-formimidoyl-L-glutamate. It is the third step in the universal histidine degradation pathway. This Pseudomonas putida (strain ATCC 47054 / DSM 6125 / CFBP 8728 / NCIMB 11950 / KT2440) protein is Imidazolonepropionase.